Consider the following 118-residue polypeptide: UPF0102 protein DICTH_1420 (118 aa).

The protein belongs to the UPF0102 family.

The chain is UPF0102 protein DICTH_1420 from Dictyoglomus thermophilum (strain ATCC 35947 / DSM 3960 / H-6-12).